The chain runs to 442 residues: Tryptophan synthase beta chain 2 (442 aa).

Lysine 110 carries the N6-(pyridoxal phosphate)lysine modification.

The protein belongs to the TrpB family. As to quaternary structure, tetramer of two alpha and two beta chains. It depends on pyridoxal 5'-phosphate as a cofactor.

It carries out the reaction (1S,2R)-1-C-(indol-3-yl)glycerol 3-phosphate + L-serine = D-glyceraldehyde 3-phosphate + L-tryptophan + H2O. Its pathway is amino-acid biosynthesis; L-tryptophan biosynthesis; L-tryptophan from chorismate: step 5/5. In terms of biological role, the beta subunit is responsible for the synthesis of L-tryptophan from indole and L-serine. The chain is Tryptophan synthase beta chain 2 from Thermococcus kodakarensis (strain ATCC BAA-918 / JCM 12380 / KOD1) (Pyrococcus kodakaraensis (strain KOD1)).